A 139-amino-acid polypeptide reads, in one-letter code: MLMPKRVKYRKTMRGRMKGNSGRGTSVDFGSFGLKALEPAWITSRQIEAARVAMTRFMKRDGKIWIRIFPDKPVTKKAAETRMGSGKGSPEFWVAVVKPGRIMFEADGVPREVATEAFRLAAQKLPIKTKFIVRPDYEG.

Belongs to the universal ribosomal protein uL16 family. As to quaternary structure, part of the 50S ribosomal subunit.

Its function is as follows. Binds 23S rRNA and is also seen to make contacts with the A and possibly P site tRNAs. The polypeptide is Large ribosomal subunit protein uL16 (Chlorobium phaeobacteroides (strain DSM 266 / SMG 266 / 2430)).